An 82-amino-acid polypeptide reads, in one-letter code: Small ribosomal subunit protein bS16 (82 aa).

This sequence belongs to the bacterial ribosomal protein bS16 family.

The sequence is that of Small ribosomal subunit protein bS16 from Yersinia pseudotuberculosis serotype O:1b (strain IP 31758).